Here is a 344-residue protein sequence, read N- to C-terminus: Methionine import ATP-binding protein MetN (344 aa).

An ABC transporter domain is found at 2 to 241 (IEINRVNKVF…PKTELARKFI (240 aa)). Residue 38 to 45 (GSSGAGKS) participates in ATP binding.

It belongs to the ABC transporter superfamily. Methionine importer (TC 3.A.1.24) family. In terms of assembly, the complex is composed of two ATP-binding proteins (MetN), two transmembrane proteins (MetI) and a solute-binding protein (MetQ).

It localises to the cell inner membrane. The enzyme catalyses L-methionine(out) + ATP + H2O = L-methionine(in) + ADP + phosphate + H(+). The catalysed reaction is D-methionine(out) + ATP + H2O = D-methionine(in) + ADP + phosphate + H(+). Functionally, part of the ABC transporter complex MetNIQ involved in methionine import. Responsible for energy coupling to the transport system. In Photobacterium profundum (strain SS9), this protein is Methionine import ATP-binding protein MetN.